Consider the following 172-residue polypeptide: Ribosome maturation factor RimM (172 aa).

The 74-residue stretch at Ala95 to Leu168 folds into the PRC barrel domain.

Belongs to the RimM family. Binds ribosomal protein uS19.

The protein resides in the cytoplasm. Functionally, an accessory protein needed during the final step in the assembly of 30S ribosomal subunit, possibly for assembly of the head region. Essential for efficient processing of 16S rRNA. May be needed both before and after RbfA during the maturation of 16S rRNA. It has affinity for free ribosomal 30S subunits but not for 70S ribosomes. This is Ribosome maturation factor RimM from Streptococcus equi subsp. zooepidemicus (strain MGCS10565).